An 86-amino-acid polypeptide reads, in one-letter code: Small ribosomal subunit protein uS17 (86 aa).

The protein belongs to the universal ribosomal protein uS17 family. Part of the 30S ribosomal subunit.

Its function is as follows. One of the primary rRNA binding proteins, it binds specifically to the 5'-end of 16S ribosomal RNA. The chain is Small ribosomal subunit protein uS17 from Chlamydia pneumoniae (Chlamydophila pneumoniae).